The primary structure comprises 483 residues: MFS-type transporter ppzB (483 aa).

5 consecutive transmembrane segments (helical) span residues 18 to 38 (FILT…GILL), 62 to 82 (AFLA…GWAA), 96 to 116 (MFLV…LLVV), 149 to 169 (IGTI…LGGV), and 178 to 198 (AVFA…ALVI). The N-linked (GlcNAc...) asparagine glycan is linked to Asn219. The next 6 membrane-spanning stretches (helical) occupy residues 281–301 (LAML…ATVP), 310–330 (FSSL…FALG), 344–364 (AAAT…GLPE), 374–394 (VALF…VTSP), 424–444 (FGFS…LGGF), and 453–473 (VMGA…FLFV).

Belongs to the major facilitator superfamily. TCR/Tet family.

It is found in the membrane. MFS-type transporter; part of the gene cluster that mediates the biosynthesis of pyrrolopyrazines, secondary metabolites showing insecticidal activity. Probably involved in the secretion of peramine and other pyrrolopyrazines. The protein is MFS-type transporter ppzB of Metarhizium rileyi (strain RCEF 4871) (Nomuraea rileyi).